The primary structure comprises 631 residues: DNA mismatch repair protein MutL (631 aa).

Disordered stretches follow at residues 337 to 362 (PHSP…ELQS) and 400 to 429 (AVQS…RAEL).

It belongs to the DNA mismatch repair MutL/HexB family.

Its function is as follows. This protein is involved in the repair of mismatches in DNA. It is required for dam-dependent methyl-directed DNA mismatch repair. May act as a 'molecular matchmaker', a protein that promotes the formation of a stable complex between two or more DNA-binding proteins in an ATP-dependent manner without itself being part of a final effector complex. The chain is DNA mismatch repair protein MutL from Shewanella oneidensis (strain ATCC 700550 / JCM 31522 / CIP 106686 / LMG 19005 / NCIMB 14063 / MR-1).